The following is a 469-amino-acid chain: MTSDGSFLMRREALQRVSPDLLADIVTSACDIALVVSPGRVVESVMVNPQFGSAERFAAWQGARLSQLFSPESAQKLENRLADGPEPGRSLQLELTHAADAFTLPVRYTITRSGEDGTLLLIGRDMQPLAEVQQQLVKAQLALERDYEAQREIETRYRVLLEAHPAPLLIVSMSTGRIADLNLAAAAMIGATRAELIDAPVGQELDGRRRGEFLENLAKIAGSDPLGAVELTIRRSRRKVTVTATLFRAAGDRLLLCRLGEAEARRTRVDDTVELSERLFLKGIDAMVFLDADGTIRAANDAFLYLTDAGSAALVQGRSFADFLSRGAVDLNVLLDNVKRIGHLRHYVTRLNTDFSGQVTVELSATLFHDRATPTIALVIRDSNLADATRIMPGMASNEGLRNVMQMVGYATLRDIVSETTEIIEKMCIETALELTGNNRVAAAELLSLSRQSLYVKLRKFGLLSKDAE.

Residues 153–225 (IETRYRVLLE…NLAKIAGSDP (73 aa)) form the PAS domain.

The protein operates within carotenoid biosynthesis; spheroidene biosynthesis. The protein is Protein CrtJ (crtJ) of Rhodobacter capsulatus (Rhodopseudomonas capsulata).